A 367-amino-acid chain; its full sequence is Glutamate 5-kinase (367 aa).

K10 contacts ATP. The substrate site is built by S50, D137, and N149. ATP contacts are provided by residues 169–170 (TD) and 211–217 (TGGMGTK). A PUA domain is found at 275–353 (AGEITVDAGA…QQIDAILGYE (79 aa)).

The protein belongs to the glutamate 5-kinase family.

It is found in the cytoplasm. The catalysed reaction is L-glutamate + ATP = L-glutamyl 5-phosphate + ADP. The protein operates within amino-acid biosynthesis; L-proline biosynthesis; L-glutamate 5-semialdehyde from L-glutamate: step 1/2. In terms of biological role, catalyzes the transfer of a phosphate group to glutamate to form L-glutamate 5-phosphate. This is Glutamate 5-kinase from Klebsiella pneumoniae subsp. pneumoniae (strain ATCC 700721 / MGH 78578).